A 345-amino-acid polypeptide reads, in one-letter code: uncharacterized protein (345 aa).

This is an uncharacterized protein from Saccharomyces cerevisiae (strain ATCC 204508 / S288c) (Baker's yeast).